Reading from the N-terminus, the 160-residue chain is Seed allergenic protein RA5 (160 aa).

An N-terminal signal peptide occupies residues 1–26 (MASNKVVFSVLLLAVVSVLAATATMA). Cystine bridges form between Cys42–Cys92, Cys56–Cys80, Cys64–Cys124, Cys81–Cys140, and Cys94–Cys152.

It belongs to the protease inhibitor I6 (cereal trypsin/alpha-amylase inhibitor) family. In terms of processing, five disulfide bonds are present.

The protein resides in the secreted. In terms of biological role, seed storage protein. This chain is Seed allergenic protein RA5 (RA5), found in Oryza sativa subsp. japonica (Rice).